The primary structure comprises 168 residues: Phosphopantetheine adenylyltransferase (168 aa).

Threonine 10 serves as a coordination point for substrate. Residues 10–11 (TF) and histidine 18 each bind ATP. Residues lysine 42, leucine 75, and arginine 89 each coordinate substrate. ATP is bound by residues 90-92 (GVR), glutamate 100, and 125-131 (YTYVASS).

The protein belongs to the bacterial CoaD family. As to quaternary structure, homohexamer. Mg(2+) is required as a cofactor.

The protein localises to the cytoplasm. The enzyme catalyses (R)-4'-phosphopantetheine + ATP + H(+) = 3'-dephospho-CoA + diphosphate. The protein operates within cofactor biosynthesis; coenzyme A biosynthesis; CoA from (R)-pantothenate: step 4/5. Its function is as follows. Reversibly transfers an adenylyl group from ATP to 4'-phosphopantetheine, yielding dephospho-CoA (dPCoA) and pyrophosphate. This is Phosphopantetheine adenylyltransferase from Prosthecochloris aestuarii (strain DSM 271 / SK 413).